Here is a 155-residue protein sequence, read N- to C-terminus: Small ribosomal subunit protein uS7c (155 aa).

It belongs to the universal ribosomal protein uS7 family. In terms of assembly, part of the 30S ribosomal subunit.

It localises to the plastid. It is found in the chloroplast. Functionally, one of the primary rRNA binding proteins, it binds directly to 16S rRNA where it nucleates assembly of the head domain of the 30S subunit. In Butomus umbellatus (Flowering rush), this protein is Small ribosomal subunit protein uS7c (rps7).